The sequence spans 201 residues: DeSI-like protein sdu1 (201 aa).

The PPPDE domain maps to 1 to 143 (MKVYINVYDL…AFPTITNALL (143 aa)). Residues H29 and C105 contribute to the active site. Residues 146–201 (GQKNTSDVDDSSDSSSDVDEETLIVSKSKKAHKDIPKFSAPPPSADLNNLITDSLP) are disordered. The span at 152–167 (DVDDSSDSSSDVDEET) shows a compositional bias: acidic residues. The span at 191–201 (DLNNLITDSLP) shows a compositional bias: polar residues.

This sequence belongs to the DeSI family.

Its subcellular location is the cytoplasm. Functionally, has a role in meiosis. The sequence is that of DeSI-like protein sdu1 (sdu1) from Schizosaccharomyces pombe (strain 972 / ATCC 24843) (Fission yeast).